Here is a 195-residue protein sequence, read N- to C-terminus: 3-isopropylmalate dehydratase small subunit (195 aa).

It belongs to the LeuD family. LeuD type 1 subfamily. In terms of assembly, heterodimer of LeuC and LeuD.

The catalysed reaction is (2R,3S)-3-isopropylmalate = (2S)-2-isopropylmalate. It functions in the pathway amino-acid biosynthesis; L-leucine biosynthesis; L-leucine from 3-methyl-2-oxobutanoate: step 2/4. In terms of biological role, catalyzes the isomerization between 2-isopropylmalate and 3-isopropylmalate, via the formation of 2-isopropylmaleate. This is 3-isopropylmalate dehydratase small subunit from Salinispora tropica (strain ATCC BAA-916 / DSM 44818 / JCM 13857 / NBRC 105044 / CNB-440).